Reading from the N-terminus, the 444-residue chain is Glutamyl-tRNA reductase (444 aa).

Substrate contacts are provided by residues 49-52 (TCNR), S117, 122-124 (EPQ), and Q128. The active-site Nucleophile is C50. 202-207 (GAGETI) serves as a coordination point for NADP(+).

It belongs to the glutamyl-tRNA reductase family. In terms of assembly, homodimer.

It carries out the reaction (S)-4-amino-5-oxopentanoate + tRNA(Glu) + NADP(+) = L-glutamyl-tRNA(Glu) + NADPH + H(+). Its pathway is porphyrin-containing compound metabolism; protoporphyrin-IX biosynthesis; 5-aminolevulinate from L-glutamyl-tRNA(Glu): step 1/2. In terms of biological role, catalyzes the NADPH-dependent reduction of glutamyl-tRNA(Glu) to glutamate 1-semialdehyde (GSA). This Mannheimia succiniciproducens (strain KCTC 0769BP / MBEL55E) protein is Glutamyl-tRNA reductase.